A 242-amino-acid chain; its full sequence is Type III pantothenate kinase (242 aa).

Residue 7-14 coordinates ATP; the sequence is DLGNSRFK. Substrate-binding positions include Tyr-91 and 98-101; that span reads GVDR. The Proton acceptor role is filled by Asp-100. Thr-121 is an ATP binding site. Thr-171 provides a ligand contact to substrate.

Belongs to the type III pantothenate kinase family. As to quaternary structure, homodimer. The cofactor is NH4(+). K(+) serves as cofactor.

It is found in the cytoplasm. The catalysed reaction is (R)-pantothenate + ATP = (R)-4'-phosphopantothenate + ADP + H(+). Its pathway is cofactor biosynthesis; coenzyme A biosynthesis; CoA from (R)-pantothenate: step 1/5. In terms of biological role, catalyzes the phosphorylation of pantothenate (Pan), the first step in CoA biosynthesis. This Xylella fastidiosa (strain 9a5c) protein is Type III pantothenate kinase.